A 298-amino-acid chain; its full sequence is Ribosomal protein L11 methyltransferase (298 aa).

T139, G163, D185, and N232 together coordinate S-adenosyl-L-methionine.

The protein belongs to the methyltransferase superfamily. PrmA family.

It localises to the cytoplasm. It catalyses the reaction L-lysyl-[protein] + 3 S-adenosyl-L-methionine = N(6),N(6),N(6)-trimethyl-L-lysyl-[protein] + 3 S-adenosyl-L-homocysteine + 3 H(+). Its function is as follows. Methylates ribosomal protein L11. The polypeptide is Ribosomal protein L11 methyltransferase (Gloeothece citriformis (strain PCC 7424) (Cyanothece sp. (strain PCC 7424))).